Reading from the N-terminus, the 390-residue chain is Methylthioribose-1-phosphate isomerase (390 aa).

Substrate is bound by residues 53-55, Arg90, and Gln207; that span reads RGA. The active-site Proton donor is Asp248. 258–259 is a binding site for substrate; that stretch reads NK.

It belongs to the EIF-2B alpha/beta/delta subunits family. MtnA subfamily.

It carries out the reaction 5-(methylsulfanyl)-alpha-D-ribose 1-phosphate = 5-(methylsulfanyl)-D-ribulose 1-phosphate. The catalysed reaction is 5-deoxy-alpha-D-ribose 1-phosphate = 5-deoxy-D-ribulose 1-phosphate. It functions in the pathway amino-acid biosynthesis; L-methionine biosynthesis via salvage pathway; L-methionine from S-methyl-5-thio-alpha-D-ribose 1-phosphate: step 1/6. In terms of biological role, catalyzes the interconversion of methylthioribose-1-phosphate (MTR-1-P) into methylthioribulose-1-phosphate (MTRu-1-P). Also catalyzes the interconversion of 5-deoxyribose 1-phosphate and 5-deoxyribulose 1-phosphate. Part of a bifunctional DHAP-shunt salvage pathway for SAM by-products. The protein is Methylthioribose-1-phosphate isomerase of Rhodospirillum rubrum (strain ATCC 11170 / ATH 1.1.1 / DSM 467 / LMG 4362 / NCIMB 8255 / S1).